The primary structure comprises 84 residues: Small ribosomal subunit protein bS18 (84 aa).

The protein belongs to the bacterial ribosomal protein bS18 family. Part of the 30S ribosomal subunit. Forms a tight heterodimer with protein bS6.

Functionally, binds as a heterodimer with protein bS6 to the central domain of the 16S rRNA, where it helps stabilize the platform of the 30S subunit. The protein is Small ribosomal subunit protein bS18 of Polynucleobacter necessarius subsp. necessarius (strain STIR1).